Here is a 197-residue protein sequence, read N- to C-terminus: 3-isopropylmalate dehydratase small subunit (197 aa).

This sequence belongs to the LeuD family. LeuD type 1 subfamily. As to quaternary structure, heterodimer of LeuC and LeuD.

The enzyme catalyses (2R,3S)-3-isopropylmalate = (2S)-2-isopropylmalate. It functions in the pathway amino-acid biosynthesis; L-leucine biosynthesis; L-leucine from 3-methyl-2-oxobutanoate: step 2/4. Its function is as follows. Catalyzes the isomerization between 2-isopropylmalate and 3-isopropylmalate, via the formation of 2-isopropylmaleate. The chain is 3-isopropylmalate dehydratase small subunit from Streptococcus suis (strain 98HAH33).